Reading from the N-terminus, the 248-residue chain is Delayed minus-nitrogen induction protein 2 (248 aa).

4 consecutive transmembrane segments (helical) span residues 26–46 (IFSNAILGIAWLFLIFLCCSC), 110–130 (VHPVLLAIVVVFSTLSIVLTI), 144–164 (ISCLTTSTAACLLLALQMALA), and 186–206 (GVAAAVFGWISSGFFLLFSLI).

It belongs to the SUR7 family.

It localises to the membrane. The protein is Delayed minus-nitrogen induction protein 2 (dni2) of Schizosaccharomyces pombe (strain 972 / ATCC 24843) (Fission yeast).